We begin with the raw amino-acid sequence, 168 residues long: Ribosome maturation factor RimP (168 aa).

This sequence belongs to the RimP family.

It is found in the cytoplasm. Functionally, required for maturation of 30S ribosomal subunits. The sequence is that of Ribosome maturation factor RimP from Syntrophobacter fumaroxidans (strain DSM 10017 / MPOB).